The primary structure comprises 481 residues: MTAIETKRIGSITQIIGPVLDAKFPPGQMPNIYNALIVKAKNEAGEDLSVTCEVQQLLGDNQVRAVAMSATDGLMRGLEILDTGAPLSVPVGEITLGRIFNVLGEPVDGLGDVVAKTKSPIHRNSPTFIELDTKLSIFETGIKVVDLLAPYRRGGKIGLFGGAGVGKTVLIMELINNIAKAHGGVSVFGGVGERTREGNDLYMEMKESKVINEENLSSSKVALVYGQMNEPPGARMRVGLTALTMAEYFRDVNNQDVLLFIDNIFRFVQAGSEVSALLGRMPSAVGYQPTLSREMGTLQERITSTKQGSITSIQAVYVPADDLTDPAPATTFAHLDATTVLSRNLAAKGIYPAVDPLDSTSTMLQPWIVGEEHYGTAQRVKQTLQRYKELQDIIAILGLDELSEEDRLVVARARKIERFLSQPFFVAEVFTGSPGKYVSLADSIKGFTMILNGELDSLPEQAFYLVGNIEEAIAKAATLKE.

161–168 (GGAGVGKT) is a binding site for ATP.

Belongs to the ATPase alpha/beta chains family. In terms of assembly, F-type ATPases have 2 components, CF(1) - the catalytic core - and CF(0) - the membrane proton channel. CF(1) has five subunits: alpha(3), beta(3), gamma(1), delta(1), epsilon(1). CF(0) has four main subunits: a(1), b(1), b'(1) and c(9-12).

Its subcellular location is the plastid. The protein resides in the chloroplast thylakoid membrane. It carries out the reaction ATP + H2O + 4 H(+)(in) = ADP + phosphate + 5 H(+)(out). Its function is as follows. Produces ATP from ADP in the presence of a proton gradient across the membrane. The catalytic sites are hosted primarily by the beta subunits. This is ATP synthase subunit beta, chloroplastic from Mesostigma viride (Green alga).